A 238-amino-acid polypeptide reads, in one-letter code: Histidine/lysine/arginine/ornithine transport system permease protein HisM (238 aa).

The Periplasmic portion of the chain corresponds to 1-26 (MIEILHEYWKPLLWTDGYRFTGVAIT). The region spanning 23-221 (VAITLWLLIL…IISYVLISLF (199 aa)) is the ABC transmembrane type-1 domain. The chain crosses the membrane as a helical span at residues 27 to 47 (LWLLILSVVIGGVLALFLAIG). Residues 48 to 58 (RVSSNKYIQFP) are Cytoplasmic-facing. The chain crosses the membrane as a helical span at residues 59-79 (IWLFTYIFRGTPLYVQLLVFY). Residues 80-104 (SGMYTLEIVKGTEFLNAFFRSGLNC) lie on the Periplasmic side of the membrane. The chain crosses the membrane as a helical span at residues 105 to 125 (TVLALTLNTCAYTTEIFAGAI). At 126 to 157 (RSVPHGEIEAARAYGFSTFKMYRCIILPSALR) the chain is on the cytoplasmic side. Residues 158 to 178 (IALPAYSNEVILMLHSTALAF) form a helical membrane-spanning segment. The Periplasmic portion of the chain corresponds to 179–199 (TATVPDLLKIARDINAATYQP). Residues 200–220 (FTAFGIAAVLYLIISYVLISL) form a helical membrane-spanning segment. The Cytoplasmic portion of the chain corresponds to 221-238 (FRRAEKRWLQHVKPSSTH).

The protein belongs to the binding-protein-dependent transport system permease family. HisMQ subfamily. The HisPMQJ complex is composed of two ATP-binding proteins (HisP), two transmembrane proteins (HisM and HisQ) and a solute-binding protein (HisJ). The HisPMQ-ArgT complex is composed of two ATP-binding proteins (HisP), two transmembrane proteins (HisM and HisQ) and a solute-binding protein (ArgT).

It is found in the cell inner membrane. Its function is as follows. Part of the ABC transporter complex HisPMQJ involved in histidine transport. Is also part of the ABC transporter complex HisPMQ-ArgT involved in lysine/arginine/ornithine transport. Probably responsible for the translocation of the substrate across the membrane. This Escherichia coli O157:H7 protein is Histidine/lysine/arginine/ornithine transport system permease protein HisM (hisM).